The primary structure comprises 80 residues: UPF0248 protein YG5714_2801 (80 aa).

It belongs to the UPF0248 family.

This chain is UPF0248 protein YG5714_2801, found in Saccharolobus islandicus (strain Y.G.57.14 / Yellowstone #1) (Sulfolobus islandicus).